Consider the following 956-residue polypeptide: MAM domain-containing glycosylphosphatidylinositol anchor protein 1 (956 aa).

An N-terminal signal peptide occupies residues 1–18 (MEVTCLLLLALIPFHCRG). 2 Ig-like domains span residues 24–123 (PAQA…KSIR) and 132–230 (PVLT…KAIT). N-linked (GlcNAc...) asparagine glycosylation occurs at N42. 2 disulfides stabilise this stretch: C60-C108 and C157-C214. N235, N247, N257, and N307 each carry an N-linked (GlcNAc...) asparagine glycan. Ig-like domains lie at 240 to 323 (PALK…KTVN), 338 to 432 (PDMI…IEVN), 440 to 532 (PTIS…AQVQ), and 539 to 650 (PEVE…PTRS). Cystine bridges form between C262–C308 and C357–C415. N432 carries N-linked (GlcNAc...) asparagine glycosylation. 2 cysteine pairs are disulfide-bonded: C463-C514 and C560-C616. Residues 627–744 (CLFQVSAKAY…SRIIHYTEPI (118 aa)) enclose the Fibronectin type-III domain. Residues 752–919 (NTCHFEDEKI…VTLKKGECPR (168 aa)) form the MAM domain. Residues 780–789 (LTQNPKRSPN) are compositionally biased toward polar residues. The interval 780-799 (LTQNPKRSPNTGPPTDISGT) is disordered. A lipid anchor (GPI-anchor amidated serine) is attached at S933. Residues 934-956 (GAPRLSSLQLWGSMAIFLLALQR) constitute a propeptide, removed in mature form.

In terms of assembly, interacts heterophilically through its MAM domain with proteins in axon-rich regions and through its Ig-like domains with proteins in differentiating muscle. Interacts (through the Ig-like domains) with NLGN2. Expressed by neurons in layers 2 and 3 of the cortex during their migration and settling in the cortical plate. Also found in layers 4 and 6a. From 9.5 dpc-13.5 dpc, detected in the marginal zone of the developing cortex. At 16.5 dpc, modest expression is found in the intermediate zone. At postnatal day 1, evident in the superficial cortical plate. By postnatal day 7, expression is limited to layers 2 and 3 throughout most of the cortex.

Its subcellular location is the cell membrane. Functionally, required for radial migration of cortical neurons in the superficial layer of the neocortex. Plays a role in the formation or maintenance of inhibitory synapses. May function by inhibiting the activity of NLGN2. The sequence is that of MAM domain-containing glycosylphosphatidylinositol anchor protein 1 from Mus musculus (Mouse).